The following is a 373-amino-acid chain: P2Y purinoceptor 1 (373 aa).

Residues 1–51 (MTEVPWSAVPNGTDAAFLAGLGSLWGNSTIASTAAVSSSFRCALIKTGFQF) lie on the Extracellular side of the membrane. Residues Asn-11 and Asn-27 are each glycosylated (N-linked (GlcNAc...) asparagine). 2 cysteine pairs are disulfide-bonded: Cys-42–Cys-296 and Cys-124–Cys-202. Residue Lys-46 participates in ADP binding. The chain crosses the membrane as a helical span at residues 52–74 (YYLPAVYILVFIIGFLGNSVAIW). Topologically, residues 75–87 (MFVFHMKPWSGIS) are cytoplasmic. A helical membrane pass occupies residues 88–109 (VYMFNLALADFLYVLTLPALIF). Residues 110–125 (YYFNKTDWIFGDVMCK) lie on the Extracellular side of the membrane. Asn-113 carries an N-linked (GlcNAc...) asparagine glycan. A helical membrane pass occupies residues 126–147 (LQRFIFHVNLYGSILFLTCISA). At 148-166 (HRYSGVVYPLKSLGRLKKK) the chain is on the cytoplasmic side. A helical membrane pass occupies residues 167 to 188 (NAIYVSVLVWLIVVVAISPILF). At 189-214 (YSGTGIRKNKTVTCYDSTSDEYLRSY) the chain is on the extracellular side. Residue Asn-197 is glycosylated (N-linked (GlcNAc...) asparagine). Position 203-205 (203-205 (YDS)) interacts with ADP. A helical membrane pass occupies residues 215 to 237 (FIYSMCTTVAMFCIPLVLILGCY). Residues 238–260 (GLIVRALIYKDLDNSPLRRKSIY) are Cytoplasmic-facing. Residues 261 to 284 (LVIIVLTVFAVSYIPFHVMKTMNL) traverse the membrane as a helical segment. ADP contacts are provided by residues 283–287 (NLRAR), 303–306 (YATY), and Arg-310. Over 285 to 303 (RARLDFQTPEMCDFNDRVY) the chain is Extracellular. A helical transmembrane segment spans residues 304–325 (ATYQVTRGLASLNSCVDPILYF). Topologically, residues 326–373 (LAGDTFRRRLSRATRKASRRSEANLQSKSEEMTLNILSEFKQNGDTSL) are cytoplasmic.

Belongs to the G-protein coupled receptor 1 family. Expressed in muscle, heart, liver, kidney, lung, brain, spleen, but not in testis.

The protein resides in the cell membrane. Functionally, receptor for extracellular adenine nucleotides such as ADP. In platelets, binding to ADP leads to mobilization of intracellular calcium ions via activation of phospholipase C, a change in platelet shape, and ultimately platelet aggregation. This is P2Y purinoceptor 1 (P2ry1) from Rattus norvegicus (Rat).